Here is a 282-residue protein sequence, read N- to C-terminus: Acyl-CoA-binding domain-containing protein 6 (282 aa).

The disordered stretch occupies residues 1–34; sequence MATPFLPAGATTGDSGGELSSGDDSGDLESFQTP. Phosphoserine is present on Ser-41. Positions 42–127 constitute an ACB domain; that stretch reads LAELFEKAAA…VKKLDPGWNP (86 aa). An acyl-CoA is bound by residues 69–73 and Lys-95; that span reads YARYK. Ser-106 is subject to Phosphoserine. Tyr-114 provides a ligand contact to an acyl-CoA. ANK repeat units lie at residues 191-220 and 224-253; these read EGRA…GINC and EGQT…DPTL.

Monomer.

It localises to the cytoplasm. The protein localises to the nucleus. Functionally, binds long-chain acyl-coenzyme A molecules with a strong preference for unsaturated C18:1-CoA, lower affinity for unsaturated C20:4-CoA, and very weak affinity for saturated C16:0-CoA. Does not bind fatty acids. Plays a role in protein N-myristoylation. This Rattus norvegicus (Rat) protein is Acyl-CoA-binding domain-containing protein 6 (Acbd6).